We begin with the raw amino-acid sequence, 362 residues long: Ferrochelatase (362 aa).

The Fe cation site is built by histidine 228 and glutamate 309.

Belongs to the ferrochelatase family.

Its subcellular location is the cytoplasm. It catalyses the reaction heme b + 2 H(+) = protoporphyrin IX + Fe(2+). It functions in the pathway porphyrin-containing compound metabolism; protoheme biosynthesis; protoheme from protoporphyrin-IX: step 1/1. In terms of biological role, catalyzes the ferrous insertion into protoporphyrin IX. The chain is Ferrochelatase from Bordetella parapertussis (strain 12822 / ATCC BAA-587 / NCTC 13253).